Here is a 107-residue protein sequence, read N- to C-terminus: Flagellar hook-basal body complex protein FliE (107 aa).

It belongs to the FliE family.

It is found in the bacterial flagellum basal body. The protein is Flagellar hook-basal body complex protein FliE of Sodalis glossinidius (strain morsitans).